The primary structure comprises 319 residues: Lipoyl synthase (319 aa).

A disordered region spans residues 5-31; it reads LDTISANPVRPRHPEKANRPDALSPPK. 7 residues coordinate [4Fe-4S] cluster: Cys-61, Cys-66, Cys-72, Cys-87, Cys-91, Cys-94, and Ser-300. Residues 73 to 289 enclose the Radical SAM core domain; sequence WDKKHATFMI…ETVAYTKGFL (217 aa).

It belongs to the radical SAM superfamily. Lipoyl synthase family. Requires [4Fe-4S] cluster as cofactor.

Its subcellular location is the cytoplasm. The catalysed reaction is [[Fe-S] cluster scaffold protein carrying a second [4Fe-4S](2+) cluster] + N(6)-octanoyl-L-lysyl-[protein] + 2 oxidized [2Fe-2S]-[ferredoxin] + 2 S-adenosyl-L-methionine + 4 H(+) = [[Fe-S] cluster scaffold protein] + N(6)-[(R)-dihydrolipoyl]-L-lysyl-[protein] + 4 Fe(3+) + 2 hydrogen sulfide + 2 5'-deoxyadenosine + 2 L-methionine + 2 reduced [2Fe-2S]-[ferredoxin]. It participates in protein modification; protein lipoylation via endogenous pathway; protein N(6)-(lipoyl)lysine from octanoyl-[acyl-carrier-protein]: step 2/2. Functionally, catalyzes the radical-mediated insertion of two sulfur atoms into the C-6 and C-8 positions of the octanoyl moiety bound to the lipoyl domains of lipoate-dependent enzymes, thereby converting the octanoylated domains into lipoylated derivatives. In Nitrobacter winogradskyi (strain ATCC 25391 / DSM 10237 / CIP 104748 / NCIMB 11846 / Nb-255), this protein is Lipoyl synthase.